A 66-amino-acid chain; its full sequence is Beta-defensin 107A (66 aa).

Residues 1–22 (MKIFFFIFAALILLAQIFQART) form the signal peptide. Cystine bridges form between cysteine 37-cysteine 51 and cysteine 41-cysteine 60.

The protein belongs to the beta-defensin family.

It localises to the secreted. In terms of biological role, has antibacterial activity. In Macaca fascicularis (Crab-eating macaque), this protein is Beta-defensin 107A (DEFB107A).